Consider the following 1005-residue polypeptide: Ephrin type-A receptor 8 (1005 aa).

The signal sequence occupies residues 1-27; it reads MAPARGRLPPALWVVTAAAAAATCVSA. The Extracellular portion of the chain corresponds to 28 to 542; it reads ARGEVNLLDT…KPRPRYDTRT (515 aa). The 179-residue stretch at 31 to 209 folds into the Eph LBD domain; that stretch reads EVNLLDTSTI…YYKKCPAMVR (179 aa). Fibronectin type-III domains lie at 328 to 438 and 439 to 534; these read PPSA…TNQA and APSQ…TGKP. N-linked (GlcNAc...) asparagine glycans are attached at residues Asn-340, Asn-407, and Asn-432. Residues 543-563 form a helical membrane-spanning segment; that stretch reads IVWICLTLITGLVVLLLLLIC. Residues 564-570 are mediates interaction with ANKS1A and ANKS1B; that stretch reads KKRHCGY. The Cytoplasmic portion of the chain corresponds to 564 to 1005; it reads KKRHCGYSKA…TSTQGPRRHL (442 aa). Residues 589 to 644 are mediates interaction with PIK3CG and required for endocytosis; the sequence is APPPVFLPLHHPPGKLPEPQFYAEPHTYEEPGRAGRSFTREIEASRIHIEKIIGSG. Tyr-616 is subject to Phosphotyrosine; by autocatalysis. The 262-residue stretch at 635-896 folds into the Protein kinase domain; sequence IHIEKIIGSG…QIVSVLDALI (262 aa). ATP contacts are provided by residues 641–649 and Lys-667; that span reads IGSGDSGEV. The Proton acceptor role is filled by Asp-760. A Phosphotyrosine; by autocatalysis modification is found at Tyr-839. The SAM domain occupies 930–994; that stretch reads GGGLTVGDWL…LGSIQTMRAQ (65 aa). The short motif at 1003 to 1005 is the PDZ-binding element; it reads RHL.

It belongs to the protein kinase superfamily. Tyr protein kinase family. Ephrin receptor subfamily. As to quaternary structure, heterotetramer upon binding of the ligand. The heterotetramer is composed of an ephrin dimer and a receptor dimer. Oligomerization is probably required to induce biological responses. May also form heterodimers with other ephrin receptors. Interacts with FYN; possible downstream effector of EPHA8 in regulation of cell adhesion. Interacts with PIK3CG; regulates integrin-mediated cell adhesion to substrate. Interacts with TIAM1; regulates clathrin-mediated endocytosis of EPHA8. Interacts with ANKS1A and ANKS1B; EPHA8 kinase activity-independent but stimulated by EPHA8 ubiquitination. In terms of processing, phosphorylated. Phosphorylation is stimulated upon binding of its ligands including EFNA2, EFNA3 and EFNA5. Autophosphorylation on Tyr-616 is critical for association with FYN. Autophosphorylation on Tyr-839 modulates tyrosine kinase activity. Ubiquitinated. Ubiquitination by CBL regulates the receptor stability and activity through proteasomal degradation. ANKS1A prevents ubiquitination and degradation.

Its subcellular location is the cell membrane. The protein localises to the cell projection. The protein resides in the early endosome membrane. It catalyses the reaction L-tyrosyl-[protein] + ATP = O-phospho-L-tyrosyl-[protein] + ADP + H(+). Functionally, receptor tyrosine kinase which binds promiscuously GPI-anchored ephrin-A family ligands residing on adjacent cells, leading to contact-dependent bidirectional signaling into neighboring cells. The signaling pathway downstream of the receptor is referred to as forward signaling while the signaling pathway downstream of the ephrin ligand is referred to as reverse signaling. The GPI-anchored ephrin-A EFNA2, EFNA3, and EFNA5 are able to activate EPHA8 through phosphorylation. With EFNA5 may regulate integrin-mediated cell adhesion and migration on fibronectin substrate but also neurite outgrowth. During development of the nervous system also plays a role in axon guidance. Downstream effectors of the EPHA8 signaling pathway include FYN which promotes cell adhesion upon activation by EPHA8 and the MAP kinases in the stimulation of neurite outgrowth. In Homo sapiens (Human), this protein is Ephrin type-A receptor 8 (EPHA8).